The sequence spans 160 residues: SPbeta prophage-derived uncharacterized protein YokE (160 aa).

This Bacillus subtilis (strain 168) protein is SPbeta prophage-derived uncharacterized protein YokE (yokE).